The following is a 201-amino-acid chain: MSLNFAAMARQSERQASTVMVPKGEEQPESPKIHTLGSNELRKPAKRISKVNEQVRELAREMLRSMYAAHGIGLAAPQVGVHQQLLVIDLDPEEAANPPLVLINPEIVATSGALDTYEEGCLSIPGVYLNVVRPSQVDVKYRDELGRPQRRKADGLMARCILHEMDHLNGVLFVDRVSDELSLSGELQRLGFDRNDVKPVA.

The tract at residues 1–34 (MSLNFAAMARQSERQASTVMVPKGEEQPESPKIH) is disordered. A compositionally biased stretch (basic and acidic residues) spans 23 to 32 (KGEEQPESPK). Fe cation contacts are provided by C121 and H163. E164 is an active-site residue. H167 lines the Fe cation pocket.

The protein belongs to the polypeptide deformylase family. Fe(2+) serves as cofactor.

It catalyses the reaction N-terminal N-formyl-L-methionyl-[peptide] + H2O = N-terminal L-methionyl-[peptide] + formate. Removes the formyl group from the N-terminal Met of newly synthesized proteins. Requires at least a dipeptide for an efficient rate of reaction. N-terminal L-methionine is a prerequisite for activity but the enzyme has broad specificity at other positions. The protein is Peptide deformylase of Synechococcus sp. (strain RCC307).